Consider the following 305-residue polypeptide: Methionyl-tRNA formyltransferase (305 aa).

Position 111 to 114 (Ser111 to Pro114) interacts with (6S)-5,6,7,8-tetrahydrofolate.

Belongs to the Fmt family.

The enzyme catalyses L-methionyl-tRNA(fMet) + (6R)-10-formyltetrahydrofolate = N-formyl-L-methionyl-tRNA(fMet) + (6S)-5,6,7,8-tetrahydrofolate + H(+). In terms of biological role, attaches a formyl group to the free amino group of methionyl-tRNA(fMet). The formyl group appears to play a dual role in the initiator identity of N-formylmethionyl-tRNA by promoting its recognition by IF2 and preventing the misappropriation of this tRNA by the elongation apparatus. This Helicobacter pylori (strain HPAG1) protein is Methionyl-tRNA formyltransferase.